Here is an 80-residue protein sequence, read N- to C-terminus: Exodeoxyribonuclease 7 small subunit (80 aa).

The protein belongs to the XseB family. Heterooligomer composed of large and small subunits.

The protein localises to the cytoplasm. The enzyme catalyses Exonucleolytic cleavage in either 5'- to 3'- or 3'- to 5'-direction to yield nucleoside 5'-phosphates.. Its function is as follows. Bidirectionally degrades single-stranded DNA into large acid-insoluble oligonucleotides, which are then degraded further into small acid-soluble oligonucleotides. The chain is Exodeoxyribonuclease 7 small subunit from Pseudomonas aeruginosa (strain LESB58).